A 217-amino-acid chain; its full sequence is Small ribosomal subunit protein uS3 (217 aa).

Residues 40 to 110 (IRDLINKGFN…EVYINIHEVR (71 aa)) enclose the KH type-2 domain.

It belongs to the universal ribosomal protein uS3 family. Part of the 30S ribosomal subunit. Forms a tight complex with proteins S10 and S14.

In terms of biological role, binds the lower part of the 30S subunit head. Binds mRNA in the 70S ribosome, positioning it for translation. The sequence is that of Small ribosomal subunit protein uS3 from Rickettsia africae (strain ESF-5).